Here is a 216-residue protein sequence, read N- to C-terminus: uncharacterized protein (216 aa).

This is an uncharacterized protein from Archaeoglobus fulgidus (strain ATCC 49558 / DSM 4304 / JCM 9628 / NBRC 100126 / VC-16).